The sequence spans 108 residues: uncharacterized protein (108 aa).

It belongs to the UPF0440 family.

This is an uncharacterized protein from Thermococcus kodakarensis (strain ATCC BAA-918 / JCM 12380 / KOD1) (Pyrococcus kodakaraensis (strain KOD1)).